A 375-amino-acid polypeptide reads, in one-letter code: Chaperone protein DnaJ (375 aa).

In terms of domain architecture, J spans 5-70 (DYYEVLGVSR…QKRAAYDQFG (66 aa)). The CR-type zinc finger occupies 131 to 209 (GTTVKIRVPS…CHGSGYVEEQ (79 aa)). Residues cysteine 144, cysteine 147, cysteine 161, cysteine 164, cysteine 183, cysteine 186, cysteine 197, and cysteine 200 each coordinate Zn(2+). CXXCXGXG motif repeat units follow at residues 144–151 (CKSCSGSG), 161–168 (CGTCNGAG), 183–190 (CPRCRGAG), and 197–204 (CRSCHGSG).

The protein belongs to the DnaJ family. As to quaternary structure, homodimer. It depends on Zn(2+) as a cofactor.

The protein resides in the cytoplasm. Participates actively in the response to hyperosmotic and heat shock by preventing the aggregation of stress-denatured proteins and by disaggregating proteins, also in an autonomous, DnaK-independent fashion. Unfolded proteins bind initially to DnaJ; upon interaction with the DnaJ-bound protein, DnaK hydrolyzes its bound ATP, resulting in the formation of a stable complex. GrpE releases ADP from DnaK; ATP binding to DnaK triggers the release of the substrate protein, thus completing the reaction cycle. Several rounds of ATP-dependent interactions between DnaJ, DnaK and GrpE are required for fully efficient folding. Also involved, together with DnaK and GrpE, in the DNA replication of plasmids through activation of initiation proteins. This chain is Chaperone protein DnaJ, found in Hahella chejuensis (strain KCTC 2396).